A 1357-amino-acid chain; its full sequence is Protein CFT1 (1357 aa).

The interval 445-465 (TREAHNPSSGTNSLMDINDDD) is disordered. The segment covering 450–459 (NPSSGTNSLM) has biased composition (polar residues).

Belongs to the CFT1 family. Component of the cleavage and polyadenylation factor (CPF) complex, which is composed of at least PTI1, SYC1, SSU72, GLC7, MPE1, REF2, PFS2, PTA1, YSH1/BRR5, SWD2, CFT2/YDH1, YTH1, CFT1/YHH1, FIP1 and PAP1. Interacts with the phosphorylated CTD domain of RPB1/RNA polymerase II.

It localises to the nucleus. In terms of biological role, RNA-binding component of the cleavage and polyadenylation factor (CPF) complex, which plays a key role in polyadenylation-dependent pre-mRNA 3'-end formation and cooperates with cleavage factors including the CFIA complex and NAB4/CFIB. Involved in poly(A) site recognition. May be involved in coupling transcription termination and mRNA 3'-end formation. This chain is Protein CFT1 (CFT1), found in Saccharomyces cerevisiae (strain ATCC 204508 / S288c) (Baker's yeast).